The primary structure comprises 408 residues: DNA primase DnaG (408 aa).

Positions 171–250 (DAIIIVEGRA…AYSPRGKSVE (80 aa)) constitute a Toprim domain. E177, D219, and D221 together coordinate Mg(2+). Positions 276 to 323 (AEENVERLPPSAAPAEVRAPAGAGRTSEGERPPRREWDSKPPSTLGEH) are disordered. The span at 284-298 (PPSAAPAEVRAPAGA) shows a compositional bias: low complexity. The segment covering 302–314 (SEGERPPRREWDS) has biased composition (basic and acidic residues).

This sequence belongs to the archaeal DnaG primase family. As to quaternary structure, forms a ternary complex with MCM helicase and DNA. Mg(2+) is required as a cofactor.

It catalyses the reaction ssDNA + n NTP = ssDNA/pppN(pN)n-1 hybrid + (n-1) diphosphate.. Its function is as follows. RNA polymerase that catalyzes the synthesis of short RNA molecules used as primers for DNA polymerase during DNA replication. The polypeptide is DNA primase DnaG (Methanoculleus marisnigri (strain ATCC 35101 / DSM 1498 / JR1)).